Here is a 533-residue protein sequence, read N- to C-terminus: DNA-directed RNA polymerase III subunit RPC3 (533 aa).

A disordered region spans residues 162–181; that stretch reads LVPDTDSSDRGPPPPAPTLV. A Phosphoserine modification is found at Ser194. The segment at 197-228 is disordered; sequence GKGKRRRSSDEDATGEPKAKKPRYTDNKEPSP. Residues 211-227 are compositionally biased toward basic and acidic residues; the sequence is GEPKAKKPRYTDNKEPS.

This sequence belongs to the eukaryotic RPC3/POLR3C RNA polymerase subunit family. As to quaternary structure, component of the RNA polymerase III complex consisting of 17 subunits: a ten-subunit horseshoe-shaped catalytic core composed of POLR3A/RPC1, POLR3B/RPC2, POLR1C/RPAC1, POLR1D/RPAC2, POLR3K/RPC10, POLR2E/RPABC1, POLR2F/RPABC2, POLR2H/RPABC3, POLR2K/RPABC4 and POLR2L/RPABC5; a mobile stalk composed of two subunits POLR3H/RPC8 and CRCP/RPC9, protruding from the core and functioning primarily in transcription initiation; and additional subunits homologous to general transcription factors of the RNA polymerase II machinery, POLR3C/RPC3-POLR3F/RPC6-POLR3G/RPC7 heterotrimer required for transcription initiation and POLR3D/RPC4-POLR3E/RPC5 heterodimer involved in both transcription initiation and termination. Directly interacts with POLR3G/RPC7 and POLR3GL. Directly interacts with POLR3F/RPC6. Interacts with GTF3C4. As part of the RNA polymerase III complex, interacts with PKP2.

It is found in the nucleus. Functionally, DNA-dependent RNA polymerase catalyzes the transcription of DNA into RNA using the four ribonucleoside triphosphates as substrates. Specific peripheric component of RNA polymerase III (Pol III) which synthesizes small non-coding RNAs including 5S rRNA, snRNAs, tRNAs and miRNAs from at least 500 distinct genomic loci. Part of POLR3C/RPC3-POLR3F/RPC6-POLR3G/RPC7 heterotrimer, coordinates the dynamics of Pol III stalk and clamp modules during the transition from apo to elongation state. Pol III plays a key role in sensing and limiting infection by intracellular bacteria and DNA viruses. Acts as a nuclear and cytosolic DNA sensor involved in innate immune response. Can sense non-self dsDNA that serves as template for transcription into dsRNA. The non-self RNA polymerase III transcripts, such as Epstein-Barr virus-encoded RNAs (EBERs) induce type I interferon and NF-kappa-B through the RIG-I pathway. Preferentially binds single-stranded DNA (ssDNA) in a sequence-independent manner. This Mus musculus (Mouse) protein is DNA-directed RNA polymerase III subunit RPC3.